Here is a 636-residue protein sequence, read N- to C-terminus: MPKHEQYFDYVKINLASPERIRQWGERILKNGEIVGKITKPETINYRTLKPEMDGLFCEKIFGPVKDWECHCGKYKSIFYRGVICERCGVEITESQVRRHRMGYIELAAPVTHIWYLKGIPSYISILLNKKVKEIEQVVYFNAYVVLNPGKSDLLNYGVILTEDDEKWPYIEEKLYTKELMDVELGIGAEAIQRLLSDLDLQAEAKTIREILISNSDKKKNTQKRAKLIKKLRIINNFIATKAKPEWMILSLIPVIPPDLRPMVQLDGGRFATSDLNDLYRRVINRNNRLLRLQEVFAPEIVVRNEKRILQEAVDALIDNGRRGRIVVGAKNRPLKSLSDIIEGKQGRFRQNLLGKRVDYSGRSVIVVGLQLKLYQCGLPWEMAIELFQPFVIHRLIHQGLVNNIKAAKKLIQSNDPIIRDILEEVIQNHPVLLNRAPTLHRLSIQAFEPILVEGRAIQLHPLVCPAFNADFDGDQMAVHVPLSLEAQTEARLLMLASNNLLSPATGQPIVTPSQDMVLGCYYLTVDNLKNQKGKGSYFINSEDVLIAYEQQRIDLHSYIWVRFDTFSFDDILEEKNIQQVLYKREIDEFGTVIKVYNTRRIREDKDGFCLTQYIITTAGRVLFNKVVQKALIMEI.

4 residues coordinate Zn(2+): cysteine 70, cysteine 72, cysteine 85, and cysteine 88. Mg(2+) contacts are provided by aspartate 471, aspartate 473, and aspartate 475.

This sequence belongs to the RNA polymerase beta' chain family. RpoC1 subfamily. The cofactor is Mg(2+). It depends on Zn(2+) as a cofactor.

It is found in the plastid. It localises to the cyanelle. It catalyses the reaction RNA(n) + a ribonucleoside 5'-triphosphate = RNA(n+1) + diphosphate. Its function is as follows. DNA-dependent RNA polymerase catalyzes the transcription of DNA into RNA using the four ribonucleoside triphosphates as substrates. This chain is DNA-directed RNA polymerase subunit beta', found in Cyanophora paradoxa.